The sequence spans 2863 residues: MASEDNRVPSPPPTGDDGGGGGREETPTEGGALSLKPGLPIRGIRMKFAVLTGLVEVGEVSNRDIVETVFNLLVGGQFDLEMNFIIQEGESINCMVDLLEKCDITCQAEVWSMFTAILKKSIRNLQVCTEVGLVEKVLGKIEKVDNMIADLLVDMLGVLASYNLTVRELKLFFSKLQGDKGRWPPHAGKLLSVLKHMPQKYGPDAFFNFPGKSAAAIALPPIAKWPYQNGFTFHTWLRMDPVNNINVDKDKPYLYCFRTSKGLGYSAHFVGGCLIVTSIKSKGKGFQHCVKFDFKPQKWYMVTIVHIYNRWKNSELRCYVNGELASYGEITWFVNTSDTFDKCFLGSSETADANRVFCGQMTAVYLFSEALNAAQIFAIYQLGLGYKGTFKFKAESDLFLAEHHKLLLYDGKLSSAIAFTYNPRATDAQLCLESSPKDNPSIFVHSPHALMLQDVKAVLTHSIQSAMHSIGGVQVLFPLFAQLDYRQYLSDEIDLTICSTLLAFIMELLKNSIAMQEQMLACKGFLVIGYSLEKSSKSHVSRAVLELCLAFSKYLSNLQNGMPLLKQLCDHVLLNPAIWIHTPAKVQLMLYTYLSTEFIGTVNIYNTIRRVGTVLLIMHTLKYYYWAVNPQDRSGITPKGLDGPRPNQKEMLSLRAFLLMFIKQLVMKDSGVKEDELQAILNYLLTMHEDDNLMDVLQLLVALMSEHPNSMIPAFDQRNGLRVIYKLLASKSEGIRVQALKAMGYFLKHLAPKRKAEVMLGHGLFSLLAERLMLQTNLITMTTYNVLFEILIEQIGTQVIHKQHPDPDSSVKIQNPQILKVIATLLRNSPQCPESMEVRRAFLSDMIKLFNNSRENRRSLLQCSVWQEWMLSLCYFNPKNSDEQKITEMVYAIFRILLYHAVKYEWGGWRVWVDTLSITHSKVTFEIHKENLANIFREQQGKVDEEIGLCSSTSVQAASGIRRDINVSVGSQQPDTKDSPVCPHFTTNGNENSSIEKTSSLESASNIELQTTNTSYEEMKAEQENQELPDEGTLEETLTNETRNADDLEVSSDIIEAVAISSNSFITTGKDSMTVSEVTASISSPSEEDASEMPEFLDKSIVEEEEDDDYVELKVEGSPTEEANLPTELQDNSLSPAASEAGEKLDMFGNDDKLIFQEGKPVTEKQTDTETQDSKDSGIQTMTASGSSAMSPETTVSQIAVESDLGQMLEEGKKATNLTRETKLINDCHGSVSEASSEQKIAKLDVSNVATDTERLELKASPNVEAPQPHRHVLEISRQHEQPGQGIAPDAVNGQRRDSRSTVFRIPEFNWSQMHQRLLTDLLFSIETDIQMWRSHSTKTVMDFVNSSDNVIFVHNTIHLISQVMDNMVMACGGILPLLSAATSATHELENIEPTQGLSIEASVTFLQRLISLVDVLIFASSLGFTEIEAEKSMSSGGILRQCLRLVCAVAVRNCLECQQHSQLKTRGDKALKPMHSLIPLGKSAAKSPVDIVTGGISPVRDLDRLLQDMDINRLRAVVFRDIEDSKQAQFLALAVVYFISVLMVSKYRDILEPQNERHSQSCTETGSENENVSLSEITPAAFSTLTTASVEESESTSSARRRDSGIGEETATGLGSHVEVTPHTAPPGVSAGPDAISEVLSTLSLEVNKSPETKNDRGNDLDTKATPSVSVSKNVNVKDILRSLVNIPADGVTVDPALLPPACLGALGDLSVEQPVQFRSFDRSVIVAAKKSAVSPSTFNTSIPTNAVSVVSSVDSAQASDMGGESPGSRSSNAKLPSVPTVDSVSQDPVSNMSITERLEHALEKAAPLLREIFVDFAPFLSRTLLGSHGQELLIEGTSLVCMKSSSSVVELVMLLCSQEWQNSIQKNAGLAFIELVNEGRLLSQTMKDHLVRVANEAEFILSRQRAEDIHRHAEFESLCAQYSADKREDEKMCDHLIRAAKYRDHVTATQLIQKIINILTDKHGAWGNSAVSRPLEFWRLDYWEDDLRRRRRFVRNPLGSTHPEATLKTAVEHVCIFKLRENSKATDEDILAKGKQSIRSQALGNQNSENEILLEGDDDTLSSVDEKDLENLAGPVSLSTPAQLVAPSVVVKGTLSVTSSELYFEVDEEDPNFKKIDPKILAYTEGLHGKWLFTEIRSIFSRRYLLQNTALEIFMANRVAVMFNFPDPATVKKVVNYLPRVGVGTSFGLPQTRRISLASPRQLFKASNMTQRWQHREISNFEYLMFLNTIAGRSYNDLNQYPVFPWVITNYESEELDLTLPTNFRDLSKPIGALNPKRAAFFAERYESWEDDQVPKFHYGTHYSTASFVLAWLLRIEPFTTYFLNLQGGKFDHADRTFSSISRAWRNSQRDTSDIKELIPEFYYLPEMFVNFNNYNLGVMDDGTVVSDVELPPWAKTSEEFVHINRLALESEFVSCQLHQWIDLIFGYKQQGPEAVRALNVFYYLTYEGAVNLNSITDPVLREAVEAQIRSFGQTPSQLLIEPHPPRGSAMQVSPLMFTDKAQQDVIMVLKFPSNSPVTHVAANTQPGLATPAVITVTANRLFAVNKWHNLPAHQGAVQDQPYQLPVEIDPLIASNTGMHRRQITDLLDQSIQVHSQCFVITSDNRYILVCGFWDKSFRVYSTDTGRLIQVVFGHWDVVTCLARSESYIGGNCYILSGSRDATLLLWYWNGKCSGIGDNPGSETAAPRAILTGHDYEVTCAAVCAELGLVLSGSQEGPCLIHSMNGDLLRTLEGPENCLKPKLIQASREGHCVIFYENGLFCTFSVNGKLQATMETDDNIRAIQLSRDGQYLLTGGDRGVVVVRQVSDLKQLFAYPGCDAGIRAMALSYDQRCIISGMASGSIVLFYNDFNRWHHEYQTRY.

Disordered stretches follow at residues Met1–Leu35, Val969–Ser1005, and Glu1018–Thr1039. Ala2 is subject to N-acetylalanine. 3 positions are modified to phosphoserine: Ser10, Ser979, and Ser1003. Residues Phe985–Ser1005 are compositionally biased toward polar residues. A coiled-coil region spans residues Asn1006–Asp1053. Residues Glu1024 to Leu1034 show a composition bias toward acidic residues. Phosphoserine occurs at positions 1100, 1135, and 1139. Basic and acidic residues predominate over residues Pro1161–Asp1176. Positions Pro1161–Glu1193 are disordered. Positions Ser1177–Glu1193 are enriched in polar residues. Phosphoserine occurs at positions 1233, 1247, and 1261. The stretch at Ser1301 to Asp1343 is one WD 1 repeat. Ser1488 and Ser1498 each carry phosphoserine. Residues Phe1531–Tyr1548 traverse the membrane as a helical segment. Low complexity predominate over residues Leu1586–Ser1599. Disordered stretches follow at residues Leu1586–Pro1668 and Gln1759–Asp1789. At Ser1605 the chain carries Phosphoserine. Basic and acidic residues predominate over residues Lys1650–Thr1664. Residues Ser1767, Ser1770, and Ser2064 each carry the phosphoserine modification. Positions Gly1769–Asp1789 are enriched in polar residues. Residues Asn2073–Pro2181 form the BEACH-type PH domain. Positions Ala2200–Arg2489 constitute a BEACH domain. Residue Ser2496 is modified to Phosphoserine. 5 WD repeats span residues Asp2591–Val2633, Gly2636–Gly2679, Gly2695–Glu2735, Glu2777–Ala2816, and Gly2819–Glu2858.

In terms of assembly, interacts with TOM1 and TOLLIP. As to expression, ubiquitous.

The protein resides in the cell membrane. The protein localises to the endoplasmic reticulum membrane. It localises to the golgi apparatus. It is found in the trans-Golgi network membrane. Its subcellular location is the lysosome membrane. Its function is as follows. Involved in coupling signal transduction and vesicle trafficking to enable polarized secretion and/or membrane deposition of immune effector molecules. Involved in phagophore growth during mitophagy by regulating ATG9A trafficking to mitochondria. The sequence is that of Lipopolysaccharide-responsive and beige-like anchor protein from Homo sapiens (Human).